A 436-amino-acid chain; its full sequence is MRISIFGLGYVGAVCAGCLSARGHEVIGVDVSSTKIDLINQGKSPIVEPGLEALLQQGRQTGRLSGTTDFKKAVLDSDVSFICVGTPSKKNGDLDLGYIETVCREIGFAIREKSERHTVVVRSTVLPGTVNNVVIPLIEDCSGKKAGVDFGVGTNPEFLRESTAIKDYDFPPMTVIGELDKQTGDLLEEIYRELDAPIIRKTVEVAEMIKYTCNVWHAAKVTFANEIGNIAKAVGVDGREVMDVICQDHKLNLSRYYMRPGFAFGGSCLPKDVRALTYRASQLDVEHPMLGSLMRSNSNQVQKAFDLITSHDTRKVGLLGLSFKAGTDDLRESPLVELAEMLIGKGYELRIFDRNVEYARVHGANKEYIESKIPHVSSLLVSDLDEVVASSDVLVLGNGDELFVDLVNKTPSGKKLVDLVGFMPHTTTAQAEGICW.

NAD(+) contacts are provided by Y10, V11, D30, K35, T86, and T124. 10 residues coordinate GDP-alpha-D-mannuronate: E161, K210, N214, H217, N225, Y256, Y257, R259, F262, and G265. Residue C268 is the Nucleophile of the active site. An NAD(+)-binding site is contributed by K271. Residues 278–295 form an inter-domain linker region; that stretch reads YRASQLDVEHPMLGSLMR. Residue K324 participates in GDP-alpha-D-mannuronate binding. Position 331 (R331) interacts with NAD(+).

The protein belongs to the UDP-glucose/GDP-mannose dehydrogenase family. As to quaternary structure, forms a domain-swapped dimer with each peptide contributing to each active site. The dimers assemble further. X-ray structures indicate this enzyme exists as a homotetramer PubMed:12705829, but kinetic and physical results obtained in PubMed:2470755 and PubMed:12135385 indicate that it is probably a homohexamer.

It catalyses the reaction GDP-alpha-D-mannose + 2 NAD(+) + H2O = GDP-alpha-D-mannuronate + 2 NADH + 3 H(+). Its pathway is glycan biosynthesis; alginate biosynthesis. With respect to regulation, inhibited by GMP, ATP, GDP-D-glucose and maltose. Inhibited by GMP and deamidoNAD. Catalyzes the oxidation of guanosine diphospho-D-mannose (GDP-D-mannose) to GDP-D-mannuronic acid, a precursor for alginate polymerization. The alginate layer causes a mucoid phenotype and provides a protective barrier against host immune defenses and antibiotics. Other sugars are not used as substrates. This chain is GDP-mannose 6-dehydrogenase, found in Pseudomonas aeruginosa (strain ATCC 15692 / DSM 22644 / CIP 104116 / JCM 14847 / LMG 12228 / 1C / PRS 101 / PAO1).